A 492-amino-acid polypeptide reads, in one-letter code: KRAB-A domain-containing protein 2 (492 aa).

The 82-residue stretch at 36–117 folds into the KRAB domain; that stretch reads LFQEATAFEN…MREKFLMSVT (82 aa). Serine 115 bears the Phosphoserine mark. Position 117 is a phosphothreonine (threonine 117). The Integrase catalytic domain occupies 247–415; that stretch reads RGLAPKPMTF…SPFEAMFGYK (169 aa). Positions 427-457 form a coiled coil; sequence RETVATLQTEEELEIAEEQLENSLWIRQEER. Positions 455-465 are enriched in basic and acidic residues; it reads EERAEIGADRS. The segment at 455 to 492 is disordered; the sequence is EERAEIGADRSDMDDDMDPTPEASEPSTSQGTSGLLCW. The segment covering 479–492 has biased composition (polar residues); that stretch reads EPSTSQGTSGLLCW.

The protein is KRAB-A domain-containing protein 2 (KRBA2) of Homo sapiens (Human).